The sequence spans 383 residues: Probable cytosolic iron-sulfur protein assembly protein 1 (383 aa).

WD repeat units lie at residues 10 to 49 (AHNDKVWSVSVHPTLPIIATASTDKSTKLYKLSARQKFPL), 56 to 108 (THKR…VEYD), 135 to 175 (GHEN…EEFE), 182 to 221 (DHSQDVKNVSWHPSMNILASSSYDDTIRIYQQDIAGDEWS), 228 to 275 (GHEG…EDDE), 302 to 341 (VHKYPVYSVAWSALTGKIASAGSDGKIVVYSETEKGKWVI), and 349 to 383 (HGVHEINCVIWAQLDDENEILVSAGDDGYVNLWKI).

It belongs to the WD repeat CIA1 family. Interacts with NAR1.

Its subcellular location is the cytoplasm. The protein resides in the nucleus. In terms of biological role, essential component of the cytosolic iron-sulfur (Fe/S) protein assembly machinery. Required for the maturation of extramitochondrial Fe/S proteins. This Candida albicans (strain SC5314 / ATCC MYA-2876) (Yeast) protein is Probable cytosolic iron-sulfur protein assembly protein 1.